The primary structure comprises 47 residues: Glyceraldehyde-3-phosphate dehydrogenase, cytosolic (47 aa).

Belongs to the glyceraldehyde-3-phosphate dehydrogenase family. Homotetramer.

The protein resides in the cytoplasm. It catalyses the reaction D-glyceraldehyde 3-phosphate + phosphate + NAD(+) = (2R)-3-phospho-glyceroyl phosphate + NADH + H(+). Its pathway is carbohydrate degradation; glycolysis; pyruvate from D-glyceraldehyde 3-phosphate: step 1/5. The sequence is that of Glyceraldehyde-3-phosphate dehydrogenase, cytosolic from Pseudotsuga menziesii (Douglas-fir).